The following is a 397-amino-acid chain: Elongation factor Tu 1 (397 aa).

The tr-type G domain maps to Lys-10–Val-207. The segment at Gly-19–Thr-26 is G1. Residue Gly-19–Thr-26 coordinates GTP. A Mg(2+)-binding site is contributed by Thr-26. The segment at Gly-60–Asn-64 is G2. The tract at residues Asp-81 to Gly-84 is G3. GTP-binding positions include Asp-81–His-85 and Asn-136–Asp-139. The segment at Asn-136–Asp-139 is G4. The tract at residues Ser-174–Leu-176 is G5.

Belongs to the TRAFAC class translation factor GTPase superfamily. Classic translation factor GTPase family. EF-Tu/EF-1A subfamily. In terms of assembly, monomer.

It localises to the cytoplasm. It catalyses the reaction GTP + H2O = GDP + phosphate + H(+). GTP hydrolase that promotes the GTP-dependent binding of aminoacyl-tRNA to the A-site of ribosomes during protein biosynthesis. The sequence is that of Elongation factor Tu 1 from Stutzerimonas stutzeri (strain A1501) (Pseudomonas stutzeri).